Reading from the N-terminus, the 254-residue chain is MNYLLISSKKDPASQNIKRHLENYGYFVHELEKKSNTSKKSDFHDSSLYVFLSKHRSESKKPTLTVHTPGNLTKDNSHGGNPEEICHCNPVFNTLLLQNIDKYNSMEEYQELGFEVSFEVLHHGPTDLNAPSAFVEIGSSEMQWQINDAAEIITNALIDTINAISYGDFEEKEKIIGLGGGHYSPKFTKLALKNEYHVGYLTPKHAKLSENILNQLITKQSFDFVTIDWKGLYGEDKKIYIEFFEKFEIPWKRV.

The protein belongs to the DtdA deacylase family. As to quaternary structure, monomer. Zn(2+) serves as cofactor.

The enzyme catalyses a D-aminoacyl-tRNA + H2O = a tRNA + a D-alpha-amino acid + H(+). It carries out the reaction glycyl-tRNA(Ala) + H2O = tRNA(Ala) + glycine + H(+). In terms of biological role, D-aminoacyl-tRNA deacylase with broad substrate specificity. By recycling D-aminoacyl-tRNA to D-amino acids and free tRNA molecules, this enzyme counteracts the toxicity associated with the formation of D-aminoacyl-tRNA entities in vivo. In Methanococcus vannielii (strain ATCC 35089 / DSM 1224 / JCM 13029 / OCM 148 / SB), this protein is D-aminoacyl-tRNA deacylase.